We begin with the raw amino-acid sequence, 446 residues long: MVGVSNWAAPSTATPVHATVTVPGSKSQTNRALVLAALAAREGSSRISGALRSRDTDLMIGALETLGLSVAASDSDPADLTVSGTLAPAAEARVDCGLAGTVLRFVPPIAALSAQTVTFDGDEQARSRPIAPLLDGLRTLGVDIDGDGLPFAVRGTGTVAGGTVEIDASGSSQFVSGLLLSGAAFTDGLTIVHTGDSVPSAPHIAMTVSMLRDAGVEVDDSAPDRWRVSPGPIGARDWVIEPDLSNSVPFLAAAVVSGGAVRITGWPTVSIQPADTILKILAGLNGEVRKGSSYLEVQGATNYGGIDVDLRDVGELAPSVAAMAALADPGSVSRLRGIAHLRGHETDRLAALSTEINGIGGQCEETEDGLVITAREMHGGTWSSYADHRMATAGAIIGLRVPGIEVEDIGTTAKTLPDFPQLWADMLGGQTDDLQQGPSARETPGR.

Residues lysine 26, serine 27, and arginine 31 each contribute to the 3-phosphoshikimate site. Lysine 26 is a binding site for phosphoenolpyruvate. Phosphoenolpyruvate-binding residues include glycine 100 and arginine 128. Residues serine 171, serine 172, glutamine 173, serine 200, glutamate 315, and histidine 344 each coordinate 3-phosphoshikimate. Position 173 (glutamine 173) interacts with phosphoenolpyruvate. Glutamate 315 acts as the Proton acceptor in catalysis. Residues arginine 348, arginine 389, and lysine 414 each contribute to the phosphoenolpyruvate site.

This sequence belongs to the EPSP synthase family. Monomer.

It localises to the cytoplasm. The enzyme catalyses 3-phosphoshikimate + phosphoenolpyruvate = 5-O-(1-carboxyvinyl)-3-phosphoshikimate + phosphate. It functions in the pathway metabolic intermediate biosynthesis; chorismate biosynthesis; chorismate from D-erythrose 4-phosphate and phosphoenolpyruvate: step 6/7. In terms of biological role, catalyzes the transfer of the enolpyruvyl moiety of phosphoenolpyruvate (PEP) to the 5-hydroxyl of shikimate-3-phosphate (S3P) to produce enolpyruvyl shikimate-3-phosphate and inorganic phosphate. The polypeptide is 3-phosphoshikimate 1-carboxyvinyltransferase (Mycolicibacterium gilvum (strain PYR-GCK) (Mycobacterium gilvum (strain PYR-GCK))).